The sequence spans 448 residues: Ribosomal protein uS12 methylthiotransferase RimO (448 aa).

Positions 13–128 constitute an MTTase N-terminal domain; that stretch reads KSFFITTLGC…AGEILRKNFP (116 aa). The [4Fe-4S] cluster site is built by C22, C58, C91, C167, C171, and C174. Positions 153–382 constitute a Radical SAM core domain; that stretch reads NYSKPYSYVK…AYLGTLKTIH (230 aa). Positions 383 to 448 constitute a TRAM domain; the sequence is QNRIGKIYPC…ELDMSGTWVD (66 aa).

The protein belongs to the methylthiotransferase family. RimO subfamily. It depends on [4Fe-4S] cluster as a cofactor.

It localises to the cytoplasm. It catalyses the reaction L-aspartate(89)-[ribosomal protein uS12]-hydrogen + (sulfur carrier)-SH + AH2 + 2 S-adenosyl-L-methionine = 3-methylsulfanyl-L-aspartate(89)-[ribosomal protein uS12]-hydrogen + (sulfur carrier)-H + 5'-deoxyadenosine + L-methionine + A + S-adenosyl-L-homocysteine + 2 H(+). Catalyzes the methylthiolation of an aspartic acid residue of ribosomal protein uS12. The polypeptide is Ribosomal protein uS12 methylthiotransferase RimO (Leptospira biflexa serovar Patoc (strain Patoc 1 / Ames)).